A 179-amino-acid polypeptide reads, in one-letter code: Bifunctional protein PyrR (179 aa).

The short motif at 97 to 109 (VILIDDVLFTGRT) is the PRPP-binding element.

Belongs to the purine/pyrimidine phosphoribosyltransferase family. PyrR subfamily.

The enzyme catalyses UMP + diphosphate = 5-phospho-alpha-D-ribose 1-diphosphate + uracil. In terms of biological role, regulates the transcription of the pyrimidine nucleotide (pyr) operon in response to exogenous pyrimidines. Also displays a weak uracil phosphoribosyltransferase activity which is not physiologically significant. The chain is Bifunctional protein PyrR from Actinobacillus pleuropneumoniae serotype 5b (strain L20).